A 90-amino-acid chain; its full sequence is Small ribosomal subunit protein bS20 (90 aa).

Belongs to the bacterial ribosomal protein bS20 family.

Functionally, binds directly to 16S ribosomal RNA. This Fusobacterium nucleatum subsp. nucleatum (strain ATCC 25586 / DSM 15643 / BCRC 10681 / CIP 101130 / JCM 8532 / KCTC 2640 / LMG 13131 / VPI 4355) protein is Small ribosomal subunit protein bS20.